The sequence spans 54 residues: Protein GndA (54 aa).

A helical membrane pass occupies residues L28–V50.

The protein resides in the cell inner membrane. This is Protein GndA from Escherichia coli (strain K12).